The primary structure comprises 33 residues: Trypsin inhibitor 1 (33 aa).

Cystine bridges form between C1–C17, C8–C21, and C16–C32.

As to expression, expressed in leaves and fruit flesh (at protein level).

Functionally, inhibits trypsin (IC(50)=471 nM). The sequence is that of Trypsin inhibitor 1 from Beta vulgaris subsp. vulgaris (Beet).